The chain runs to 357 residues: Probable GTP 3',8-cyclase (357 aa).

In terms of domain architecture, Radical SAM core spans 5–234 (DFGRDVSGVR…DRRRYWVSSR (230 aa)). Arginine 14 contributes to the GTP binding site. 2 residues coordinate [4Fe-4S] cluster: cysteine 21 and cysteine 25. An S-adenosyl-L-methionine-binding site is contributed by tyrosine 27. A [4Fe-4S] cluster-binding site is contributed by cysteine 28. GTP is bound at residue lysine 68. S-adenosyl-L-methionine is bound at residue glycine 72. Threonine 96 lines the GTP pocket. Serine 120 lines the S-adenosyl-L-methionine pocket. Lysine 157 serves as a coordination point for GTP. Positions 232 to 256 (SSRDAGSTADDAAQSVTPDGGAHPD) are disordered. Residues cysteine 272 and cysteine 275 each coordinate [4Fe-4S] cluster. GTP is bound at residue 277–279 (RVR). Cysteine 289 serves as a coordination point for [4Fe-4S] cluster.

The protein belongs to the radical SAM superfamily. MoaA family. [4Fe-4S] cluster serves as cofactor.

It carries out the reaction GTP + AH2 + S-adenosyl-L-methionine = (8S)-3',8-cyclo-7,8-dihydroguanosine 5'-triphosphate + 5'-deoxyadenosine + L-methionine + A + H(+). It participates in cofactor biosynthesis; molybdopterin biosynthesis. In terms of biological role, catalyzes the cyclization of GTP to (8S)-3',8-cyclo-7,8-dihydroguanosine 5'-triphosphate. In Halobacterium salinarum (strain ATCC 29341 / DSM 671 / R1), this protein is Probable GTP 3',8-cyclase.